Here is a 390-residue protein sequence, read N- to C-terminus: Glucose-fructose oxidoreductase domain-containing protein 1 (390 aa).

Positions Met1–Leu21 are cleaved as a signal peptide. 3 N-linked (GlcNAc...) asparagine glycosylation sites follow: Asn161, Asn270, and Asn354.

Belongs to the Gfo/Idh/MocA family. As to quaternary structure, homodimer.

The protein localises to the secreted. In terms of biological role, probably catalytically inactive enzyme. Does not bind NAD or NADP. This is Glucose-fructose oxidoreductase domain-containing protein 1 (gfod1) from Xenopus tropicalis (Western clawed frog).